We begin with the raw amino-acid sequence, 202 residues long: CASP-like protein 2U7 (202 aa).

Topologically, residues 1–10 are cytoplasmic; sequence MLELYEKRRA. A helical transmembrane segment spans residues 11–31; sequence LLLLRLAAMFLSLAALLITVL. The Extracellular portion of the chain corresponds to 32–64; the sequence is NREDGFFSINVFGSPQPILTKATADFTLVKGLK. A helical transmembrane segment spans residues 65–85; the sequence is FFAGAMGIVAGYSFLQLAIAM. Residues 86 to 101 lie on the Cytoplasmic side of the membrane; that stretch reads ASMFSGAPSILGGKRM. The chain crosses the membrane as a helical span at residues 102–122; that stretch reads AWLCFVGDMTASHLCAAAAAV. Residues 123 to 148 lie on the Extracellular side of the membrane; the sequence is SAQLAYLGKRGAPMWSAVCTYFSHYC. The chain crosses the membrane as a helical span at residues 149-169; it reads LVFGLAVIFAFLATLAALLVA. Residues 170–202 are Cytoplasmic-facing; the sequence is SISSYHLFRLHGILQQQQQQRRQLQQEHVQDKP.

Belongs to the Casparian strip membrane proteins (CASP) family. In terms of assembly, homodimer and heterodimers.

The protein resides in the cell membrane. The polypeptide is CASP-like protein 2U7 (Selaginella moellendorffii (Spikemoss)).